The chain runs to 296 residues: Glycine--tRNA ligase alpha subunit (296 aa).

It belongs to the class-II aminoacyl-tRNA synthetase family. Tetramer of two alpha and two beta subunits.

It is found in the cytoplasm. The enzyme catalyses tRNA(Gly) + glycine + ATP = glycyl-tRNA(Gly) + AMP + diphosphate. The sequence is that of Glycine--tRNA ligase alpha subunit from Listeria monocytogenes serotype 4b (strain CLIP80459).